The primary structure comprises 244 residues: 5-oxoprolinase subunit A (244 aa).

The protein belongs to the LamB/PxpA family. As to quaternary structure, forms a complex composed of PxpA, PxpB and PxpC.

The enzyme catalyses 5-oxo-L-proline + ATP + 2 H2O = L-glutamate + ADP + phosphate + H(+). In terms of biological role, catalyzes the cleavage of 5-oxoproline to form L-glutamate coupled to the hydrolysis of ATP to ADP and inorganic phosphate. The chain is 5-oxoprolinase subunit A from Citrobacter koseri (strain ATCC BAA-895 / CDC 4225-83 / SGSC4696).